A 984-amino-acid polypeptide reads, in one-letter code: Ephrin type-B receptor 1 (984 aa).

The N-terminal stretch at 1–17 (MALDCLLLFLLASAVAA) is a signal peptide. The Extracellular segment spans residues 18-540 (MEETLMDTRT…YKSELREQLP (523 aa)). In terms of domain architecture, Eph LBD spans 19-201 (EETLMDTRTA…FFKKCPSIVQ (183 aa)). Fibronectin type-III domains are found at residues 322–432 (VPSG…TNQA) and 433–528 (APST…TLTD). 3 N-linked (GlcNAc...) asparagine glycosylation sites follow: Asn-334, Asn-426, and Asn-480. The chain crosses the membrane as a helical span at residues 541 to 563 (LIAGSAAAGVVFVVSLVAISIVC). Topologically, residues 564–984 (SRKRAYSKEA…QMNQSPSVMA (421 aa)) are cytoplasmic. Tyr-600 carries the post-translational modification Phosphotyrosine. Positions 619–882 (VKIEEVIGAG…EIVNTLDKMI (264 aa)) constitute a Protein kinase domain. Residues 625–633 (IGAGEFGEV) and Lys-651 contribute to the ATP site. Catalysis depends on Asp-744, which acts as the Proton acceptor. The region spanning 911 to 975 (TAFTTVDDWL…LSSIHSMRVQ (65 aa)) is the SAM domain. The residue at position 928 (Tyr-928) is a Phosphotyrosine; by autocatalysis. Positions 982–984 (VMA) match the PDZ-binding motif.

The protein belongs to the protein kinase superfamily. Tyr protein kinase family. Ephrin receptor subfamily. In terms of assembly, heterotetramer upon binding of the ligand. The heterotetramer is composed of an ephrin dimer and a receptor dimer. Oligomerization is probably required to induce biological responses. Interacts with EPHB6; transphosphorylates EPHB6 to form an active signaling complex. Interacts with PICK1. Interacts (through Tyr-594) with NCK1 (via SH2 domain); activates the JUN cascade to regulate cell adhesion. The ligand-activated form interacts (through Tyr-928) with GRB7 and GRB10 (via SH2 domains). The ligand-activated form interacts (residues within the catalytic domain) with GRB2 (via SH2 domain). Interacts with GRB2, SHC1 and SRC; activates the MAPK/ERK cascade to regulate cell migration. Interacts with CBL; regulates receptor degradation through ubiquitination. Interacts with ACP1. Phosphorylated. Autophosphorylation is stimulated by the ligand EFNB1. Required for interaction with SH2 domain-containing interactors, for activation of the MAPK/ERK and JUN signaling cascades and for ubiquitination by CBL. Post-translationally, ubiquitinated; (EFNB1)ligand-induced poly- and/or multi-ubiquitination by CBL is regulated by SRC and leads to lysosomal degradation. In terms of tissue distribution, expressed in neural stem and progenitor cells in the dentate gyrus. Expressed in myogenic progenitor cells.

Its subcellular location is the cell membrane. The protein resides in the early endosome membrane. It is found in the cell projection. It localises to the dendrite. It carries out the reaction L-tyrosyl-[protein] + ATP = O-phospho-L-tyrosyl-[protein] + ADP + H(+). Functionally, receptor tyrosine kinase which binds promiscuously transmembrane ephrin-B family ligands residing on adjacent cells, leading to contact-dependent bidirectional signaling into neighboring cells. The signaling pathway downstream of the receptor is referred to as forward signaling while the signaling pathway downstream of the ephrin ligand is referred to as reverse signaling. Cognate/functional ephrin ligands for this receptor include EFNB1, EFNB2 and EFNB3. During nervous system development, regulates retinal axon guidance redirecting ipsilaterally ventrotemporal retinal ganglion cells axons at the optic chiasm midline. This probably requires repulsive interaction with EFNB2. In the adult nervous system together with EFNB3, regulates chemotaxis, proliferation and polarity of the hippocampus neural progenitors. In addition to its role in axon guidance also plays an important redundant role with other ephrin-B receptors in development and maturation of dendritic spines and synapse formation. May also regulate angiogenesis. More generally, may play a role in targeted cell migration and adhesion. Upon activation by EFNB1 and probably other ephrin-B ligands activates the MAPK/ERK and the JNK signaling cascades to regulate cell migration and adhesion respectively. Involved in the maintenance of the pool of satellite cells (muscle stem cells) by promoting their self-renewal and reducing their activation and differentiation. The polypeptide is Ephrin type-B receptor 1 (Ephb1) (Mus musculus (Mouse)).